Consider the following 497-residue polypeptide: Tripartite motif-containing protein 5 (497 aa).

At A2 the chain carries N-acetylalanine. An RING-type zinc finger spans residues 15 to 60 (CPICLELLTEPLSLPCGHSFCQACITANHRKSMLYKEGERSCPVCR). S87 carries the phosphoserine modification. The B box-type zinc-finger motif lies at 92–133 (LKVDHCARHGEKLLLFCQEDSKVICWLCERSQEHRGHHTFLM). C97, H100, C119, and H125 together coordinate Zn(2+). The stretch at 137-225 (AQEYHVKLQT…LTKSETEMVQ (89 aa)) forms a coiled coil. The interval 187–200 (FEQLREILDWEESN) is required for interaction with GABARAP and for autophagy. The region spanning 283–497 (LKGMLDMFRE…VPMTLCSPSS (215 aa)) is the B30.2/SPRY domain.

Belongs to the TRIM/RBCC family. In terms of assembly, can form homodimers and homotrimers. In addition to lower-order dimerization, also exhibits a higher-order multimerization and both low- and high-order multimerizations are essential for its restriction activity. Interacts with BTBD1 and BTBD2. Interacts with PSMC4, PSMC5, PSMD7 and HSPA8/HSC70. Interacts (via B30.2/SPRY domain) with HSPA1A/B. Interacts with PSMC2, MAP3K7/TAK1, TAB2 and TAB3. Interacts with SQSTM1. Interacts with TRIM6 and TRIM34. Interacts with ULK1 (phosphorylated form), GABARAP, GABARAPL1, GABARAPL2, MAP1LC3A, MAP1LC3C and BECN1. Post-translationally, degraded in a proteasome-independent fashion in the absence of viral infection but in a proteasome-dependent fashion following exposure to restriction sensitive virus. In terms of processing, autoubiquitinated in a RING finger- and UBE2D2-dependent manner. Monoubiquitinated by TRIM21. Deubiquitinated by Yersinia YopJ. Ubiquitination may not lead to proteasomal degradation.

The protein localises to the cytoplasm. Its subcellular location is the nucleus. The enzyme catalyses S-ubiquitinyl-[E2 ubiquitin-conjugating enzyme]-L-cysteine + [acceptor protein]-L-lysine = [E2 ubiquitin-conjugating enzyme]-L-cysteine + N(6)-ubiquitinyl-[acceptor protein]-L-lysine.. It participates in protein modification; protein ubiquitination. Capsid-specific restriction factor that prevents infection from non-host-adapted retroviruses. Blocks viral replication early in the life cycle, after viral entry but before reverse transcription. In addition to acting as a capsid-specific restriction factor, also acts as a pattern recognition receptor that activates innate immune signaling in response to the retroviral capsid lattice. Binding to the viral capsid triggers its E3 ubiquitin ligase activity, and in concert with the heterodimeric ubiquitin conjugating enzyme complex UBE2V1-UBE2N (also known as UBC13-UEV1A complex) generates 'Lys-63'-linked polyubiquitin chains, which in turn are catalysts in the autophosphorylation of the MAP3K7/TAK1 complex (includes TAK1, TAB2, and TAB3). Activation of the MAP3K7/TAK1 complex by autophosphorylation results in the induction and expression of NF-kappa-B and MAPK-responsive inflammatory genes, thereby leading to an innate immune response in the infected cell. Plays a role in regulating autophagy through activation of autophagy regulator BECN1 by causing its dissociation from its inhibitors BCL2 and TAB2. This chain is Tripartite motif-containing protein 5 (TRIM5), found in Papio anubis (Olive baboon).